We begin with the raw amino-acid sequence, 432 residues long: Pachytene checkpoint protein 2 homolog (432 aa).

Residue 179 to 186 participates in ATP binding; it reads GPPGTGKT.

The protein belongs to the AAA ATPase family. PCH2 subfamily.

Its function is as follows. Plays a key role in chromosome recombination and chromosome structure development during meiosis. Required at early steps in meiotic recombination that leads to non-crossovers pathways. Also needed for efficient completion of homologous synapsis by influencing crossover distribution along the chromosomes affecting both crossovers and non-crossovers pathways. The sequence is that of Pachytene checkpoint protein 2 homolog (TRIP13) from Gallus gallus (Chicken).